The primary structure comprises 364 residues: Alanine racemase (364 aa).

The active-site Proton acceptor; specific for D-alanine is lysine 34. Lysine 34 bears the N6-(pyridoxal phosphate)lysine mark. Arginine 129 serves as a coordination point for substrate. The active-site Proton acceptor; specific for L-alanine is tyrosine 259. Methionine 307 serves as a coordination point for substrate.

It belongs to the alanine racemase family. Pyridoxal 5'-phosphate serves as cofactor.

The catalysed reaction is L-alanine = D-alanine. It participates in amino-acid biosynthesis; D-alanine biosynthesis; D-alanine from L-alanine: step 1/1. Catalyzes the interconversion of L-alanine and D-alanine. May also act on other amino acids. This is Alanine racemase (alr) from Coxiella burnetii (strain CbuK_Q154) (Coxiella burnetii (strain Q154)).